Here is a 365-residue protein sequence, read N- to C-terminus: UDP-N-acetylglucosamine--N-acetylmuramyl-(pentapeptide) pyrophosphoryl-undecaprenol N-acetylglucosamine transferase (365 aa).

UDP-N-acetyl-alpha-D-glucosamine contacts are provided by residues 19–21 (TGG), asparagine 131, arginine 170, serine 201, isoleucine 255, 274–279 (ALTVTE), and glutamine 300.

The protein belongs to the glycosyltransferase 28 family. MurG subfamily.

It is found in the cell inner membrane. The enzyme catalyses di-trans,octa-cis-undecaprenyl diphospho-N-acetyl-alpha-D-muramoyl-L-alanyl-D-glutamyl-meso-2,6-diaminopimeloyl-D-alanyl-D-alanine + UDP-N-acetyl-alpha-D-glucosamine = di-trans,octa-cis-undecaprenyl diphospho-[N-acetyl-alpha-D-glucosaminyl-(1-&gt;4)]-N-acetyl-alpha-D-muramoyl-L-alanyl-D-glutamyl-meso-2,6-diaminopimeloyl-D-alanyl-D-alanine + UDP + H(+). The protein operates within cell wall biogenesis; peptidoglycan biosynthesis. Cell wall formation. Catalyzes the transfer of a GlcNAc subunit on undecaprenyl-pyrophosphoryl-MurNAc-pentapeptide (lipid intermediate I) to form undecaprenyl-pyrophosphoryl-MurNAc-(pentapeptide)GlcNAc (lipid intermediate II). This chain is UDP-N-acetylglucosamine--N-acetylmuramyl-(pentapeptide) pyrophosphoryl-undecaprenol N-acetylglucosamine transferase, found in Acinetobacter baylyi (strain ATCC 33305 / BD413 / ADP1).